We begin with the raw amino-acid sequence, 184 residues long: Holliday junction branch migration complex subunit RuvA (184 aa).

Residues 1-64 (MIRAIEGIIT…EDANLLYGFL (64 aa)) form a domain I region. The interval 65-144 (DTNEQKMFEM…SDESVPGYQN (80 aa)) is domain II. Asn-144 is a region of interest (flexible linker). The interval 144–184 (NEALLALEALGFKREKIVKILPDLKSTSTSELVKEALKKLA) is domain III.

This sequence belongs to the RuvA family. Homotetramer. Forms an RuvA(8)-RuvB(12)-Holliday junction (HJ) complex. HJ DNA is sandwiched between 2 RuvA tetramers; dsDNA enters through RuvA and exits via RuvB. An RuvB hexamer assembles on each DNA strand where it exits the tetramer. Each RuvB hexamer is contacted by two RuvA subunits (via domain III) on 2 adjacent RuvB subunits; this complex drives branch migration. In the full resolvosome a probable DNA-RuvA(4)-RuvB(12)-RuvC(2) complex forms which resolves the HJ.

The protein resides in the cytoplasm. The RuvA-RuvB-RuvC complex processes Holliday junction (HJ) DNA during genetic recombination and DNA repair, while the RuvA-RuvB complex plays an important role in the rescue of blocked DNA replication forks via replication fork reversal (RFR). RuvA specifically binds to HJ cruciform DNA, conferring on it an open structure. The RuvB hexamer acts as an ATP-dependent pump, pulling dsDNA into and through the RuvAB complex. HJ branch migration allows RuvC to scan DNA until it finds its consensus sequence, where it cleaves and resolves the cruciform DNA. This is Holliday junction branch migration complex subunit RuvA from Campylobacter curvus (strain 525.92).